The following is a 140-amino-acid chain: MAIQRTFSIIKPDATKRNLTGQIAAKFEEAGLRIVASKRIQLTLAQAQAFYGVHSERPFFGELCEFMISEPIVVQVLEGEDAIVKNREVMGATNPADAAPGTIRKEFALSIGENSVHGSDAPETAAEEIAFFFSGLELVG.

Residues K11, F59, R87, T93, R104, and N114 each contribute to the ATP site. The active-site Pros-phosphohistidine intermediate is H117.

It belongs to the NDK family. In terms of assembly, homotetramer. Mg(2+) serves as cofactor.

Its subcellular location is the cytoplasm. It carries out the reaction a 2'-deoxyribonucleoside 5'-diphosphate + ATP = a 2'-deoxyribonucleoside 5'-triphosphate + ADP. The enzyme catalyses a ribonucleoside 5'-diphosphate + ATP = a ribonucleoside 5'-triphosphate + ADP. Major role in the synthesis of nucleoside triphosphates other than ATP. The ATP gamma phosphate is transferred to the NDP beta phosphate via a ping-pong mechanism, using a phosphorylated active-site intermediate. This chain is Nucleoside diphosphate kinase, found in Jannaschia sp. (strain CCS1).